Consider the following 171-residue polypeptide: NADH-quinone oxidoreductase subunit B 1 (171 aa).

[4Fe-4S] cluster-binding residues include Cys-44, Cys-45, Cys-110, and Cys-139.

This sequence belongs to the complex I 20 kDa subunit family. In terms of assembly, NDH-1 is composed of 14 different subunits. Subunits NuoB, C, D, E, F, and G constitute the peripheral sector of the complex. The cofactor is [4Fe-4S] cluster.

The protein resides in the cell inner membrane. The catalysed reaction is a quinone + NADH + 5 H(+)(in) = a quinol + NAD(+) + 4 H(+)(out). NDH-1 shuttles electrons from NADH, via FMN and iron-sulfur (Fe-S) centers, to quinones in the respiratory chain. The immediate electron acceptor for the enzyme in this species is believed to be ubiquinone. Couples the redox reaction to proton translocation (for every two electrons transferred, four hydrogen ions are translocated across the cytoplasmic membrane), and thus conserves the redox energy in a proton gradient. The protein is NADH-quinone oxidoreductase subunit B 1 of Opitutus terrae (strain DSM 11246 / JCM 15787 / PB90-1).